The primary structure comprises 316 residues: Protoheme IX farnesyltransferase 2 (316 aa).

The span at 1–15 (MEQNLNSEQKPQSSA) shows a compositional bias: polar residues. The tract at residues 1 to 24 (MEQNLNSEQKPQSSAKPRGKSSRS) is disordered. 7 helical membrane passes run 62 to 82 (IPEM…AGAF), 117 to 137 (IVML…AAAF), 163 to 183 (IGSI…STDI), 188 to 208 (IARF…AIAI), 231 to 251 (TYYQ…LFGS), 252 to 272 (LSVG…VMSI), and 293 to 313 (LFHM…GVIF).

This sequence belongs to the UbiA prenyltransferase family. Protoheme IX farnesyltransferase subfamily. Interacts with CtaA.

Its subcellular location is the cell membrane. The enzyme catalyses heme b + (2E,6E)-farnesyl diphosphate + H2O = Fe(II)-heme o + diphosphate. It functions in the pathway porphyrin-containing compound metabolism; heme O biosynthesis; heme O from protoheme: step 1/1. Functionally, converts heme B (protoheme IX) to heme O by substitution of the vinyl group on carbon 2 of heme B porphyrin ring with a hydroxyethyl farnesyl side group. This Lysinibacillus sphaericus (strain C3-41) protein is Protoheme IX farnesyltransferase 2.